The primary structure comprises 216 residues: CsgBAC operon transcriptional regulatory protein (216 aa).

Residues 149–214 enclose the HTH luxR-type domain; the sequence is NSTESALLTH…QAVSWANDNL (66 aa). Positions 173–192 form a DNA-binding region, H-T-H motif; sequence NNEIARSLFISENTVKTHLY.

The protein localises to the cell inner membrane. Functionally, the master regulator for adhesive curli fimbriae expression; necessary for transcription of the csgBAC/ymdA operon. Plays a positive role in biofilm formation. May have the capability to respond to starvation and/or high cell density by activating csgBA transcription. Low-level constitutive expression confers an adherent curli fimbriae-expressing phenotype, up-regulates 10 genes and down-regulates 14 others. This Escherichia coli (strain K12) protein is CsgBAC operon transcriptional regulatory protein (csgD).